Reading from the N-terminus, the 121-residue chain is Large ribosomal subunit protein bL20 (121 aa).

This sequence belongs to the bacterial ribosomal protein bL20 family.

Binds directly to 23S ribosomal RNA and is necessary for the in vitro assembly process of the 50S ribosomal subunit. It is not involved in the protein synthesizing functions of that subunit. The protein is Large ribosomal subunit protein bL20 of Koribacter versatilis (strain Ellin345).